Reading from the N-terminus, the 381-residue chain is MQTLLFYFFFINLIFAHDLNVKTYKPCTIPSVFSEQFTSEDITTWRSRWRAPVNKDLGVWDLVEAPGSHLRDEYGLITLKSNKPHILISNLENPTTRQSSSVPIVLSFQVKPTKPWTCGHAYVSLVHQSNPKNVSKEPPSVIRFGVKKCGMFDYISLSIISYDGKVSCHLYDAPPSGLVEGRTSMYTLLLQNTTVVIRRDQSVVYTGDVGTNFFHSPTKWITHSNVSNGYYTSRNIMSFLLSNNTNTSSYPFSVNGVELDVWNENAGVFINNIYFGFSLSDAMKFENETFIAKKILENSPCPNQPSIQPFGILMMLVSTIYGNFKNLYNCIKRNTIGYIYNSIYDFWITEGMLFPMRNMDIFKITAISIGLSIPVFLWLLK.

An N-terminal signal peptide occupies residues Met-1–Ala-16. The Lumenal portion of the chain corresponds to His-17–Asn-303. A disulfide bridge links Cys-118 with Cys-149. N-linked (GlcNAc...) asparagine glycosylation is found at Asn-133, Asn-192, Asn-225, Asn-243, Asn-246, and Asn-287. Residues Gln-304–Phe-324 form a helical membrane-spanning segment. The Cytoplasmic segment spans residues Lys-325 to Met-359. The helical transmembrane segment at Asp-360–Leu-380 threads the bilayer. Position 381 (Lys-381) is a topological domain, lumenal.

This sequence belongs to the calreticulin family.

It localises to the endoplasmic reticulum membrane. This is an uncharacterized protein from Schizosaccharomyces pombe (strain 972 / ATCC 24843) (Fission yeast).